A 201-amino-acid polypeptide reads, in one-letter code: Oligoribonuclease (201 aa).

The 164-residue stretch at Leu20–Leu183 folds into the Exonuclease domain. The active site involves Tyr141.

It belongs to the oligoribonuclease family.

The protein resides in the cytoplasm. Its function is as follows. 3'-to-5' exoribonuclease specific for small oligoribonucleotides. This Burkholderia pseudomallei (strain 1106a) protein is Oligoribonuclease.